The sequence spans 158 residues: Anaerobic ribonucleoside-triphosphate reductase-activating protein (158 aa).

[4Fe-4S] cluster contacts are provided by Cys26, Cys30, and Cys33. S-adenosyl-L-methionine contacts are provided by residues 32-34 (GCY) and Gly74.

The protein belongs to the organic radical-activating enzymes family. As to quaternary structure, forms a tetramer composed of two NrdD and two NrdG subunits. Requires [4Fe-4S] cluster as cofactor.

It localises to the cytoplasm. It carries out the reaction glycyl-[protein] + reduced [flavodoxin] + S-adenosyl-L-methionine = glycin-2-yl radical-[protein] + semiquinone [flavodoxin] + 5'-deoxyadenosine + L-methionine + H(+). Activation of anaerobic ribonucleoside-triphosphate reductase under anaerobic conditions by generation of an organic free radical, using S-adenosylmethionine and reduced flavodoxin as cosubstrates to produce 5'-deoxy-adenosine. The protein is Anaerobic ribonucleoside-triphosphate reductase-activating protein (nrdG) of Pasteurella multocida (strain Pm70).